Reading from the N-terminus, the 457-residue chain is Siroheme synthase (457 aa).

Residues 1-204 form a precorrin-2 dehydrogenase /sirohydrochlorin ferrochelatase region; it reads MDHLPIFCQL…NDQKAITETT (204 aa). NAD(+)-binding positions include 22–23 and 43–44; these read DV and LA. Serine 128 carries the phosphoserine modification. The tract at residues 216-457 is uroporphyrinogen-III C-methyltransferase; sequence GEVVLVGAGP…RDKLNWFSNH (242 aa). Proline 225 contributes to the S-adenosyl-L-methionine binding site. Aspartate 248 serves as the catalytic Proton acceptor. Lysine 270 acts as the Proton donor in catalysis. Residues 301 to 303, isoleucine 306, 331 to 332, methionine 382, and glycine 411 each bind S-adenosyl-L-methionine; these read GGD and TA.

This sequence in the N-terminal section; belongs to the precorrin-2 dehydrogenase / sirohydrochlorin ferrochelatase family. The protein in the C-terminal section; belongs to the precorrin methyltransferase family.

It catalyses the reaction uroporphyrinogen III + 2 S-adenosyl-L-methionine = precorrin-2 + 2 S-adenosyl-L-homocysteine + H(+). It carries out the reaction precorrin-2 + NAD(+) = sirohydrochlorin + NADH + 2 H(+). The enzyme catalyses siroheme + 2 H(+) = sirohydrochlorin + Fe(2+). It participates in cofactor biosynthesis; adenosylcobalamin biosynthesis; precorrin-2 from uroporphyrinogen III: step 1/1. Its pathway is cofactor biosynthesis; adenosylcobalamin biosynthesis; sirohydrochlorin from precorrin-2: step 1/1. It functions in the pathway porphyrin-containing compound metabolism; siroheme biosynthesis; precorrin-2 from uroporphyrinogen III: step 1/1. The protein operates within porphyrin-containing compound metabolism; siroheme biosynthesis; siroheme from sirohydrochlorin: step 1/1. It participates in porphyrin-containing compound metabolism; siroheme biosynthesis; sirohydrochlorin from precorrin-2: step 1/1. In terms of biological role, multifunctional enzyme that catalyzes the SAM-dependent methylations of uroporphyrinogen III at position C-2 and C-7 to form precorrin-2 via precorrin-1. Then it catalyzes the NAD-dependent ring dehydrogenation of precorrin-2 to yield sirohydrochlorin. Finally, it catalyzes the ferrochelation of sirohydrochlorin to yield siroheme. This chain is Siroheme synthase, found in Escherichia coli O6:K15:H31 (strain 536 / UPEC).